The primary structure comprises 150 residues: MNVILLDKIANLGNLGDQVSVKAGYARNFLLPQGKAVVANESNVKVFEARRAELEAKLAAELAAANLRAEKITALEAVVIASKAGDEGKLFGSVGNRDIADAVTAAGVELAKAEVRLPLGALRTTGDFEVEVQLHTEVKAVVKVSVVAEA.

The protein belongs to the bacterial ribosomal protein bL9 family.

Binds to the 23S rRNA. The sequence is that of Large ribosomal subunit protein bL9 from Shewanella baltica (strain OS155 / ATCC BAA-1091).